Reading from the N-terminus, the 688-residue chain is Elongation factor G (688 aa).

Residues E8–C282 form the tr-type G domain. GTP-binding positions include A17–T24, D81–H85, and N135–D138.

The protein belongs to the TRAFAC class translation factor GTPase superfamily. Classic translation factor GTPase family. EF-G/EF-2 subfamily.

Its subcellular location is the cytoplasm. In terms of biological role, catalyzes the GTP-dependent ribosomal translocation step during translation elongation. During this step, the ribosome changes from the pre-translocational (PRE) to the post-translocational (POST) state as the newly formed A-site-bound peptidyl-tRNA and P-site-bound deacylated tRNA move to the P and E sites, respectively. Catalyzes the coordinated movement of the two tRNA molecules, the mRNA and conformational changes in the ribosome. The polypeptide is Elongation factor G (Onion yellows phytoplasma (strain OY-M)).